Reading from the N-terminus, the 362-residue chain is Vignain (362 aa).

A signal peptide spans 1–20 (MATKKLLWVVLSFSLVLGVA). Positions 21–131 (NSFDFHDKDL…YEKVVSVPPS (111 aa)) are cleaved as a propeptide — activation peptide. Disulfide bonds link Cys-149–Cys-191, Cys-183–Cys-224, and Cys-282–Cys-334. Cys-152 is a catalytic residue. Active-site residues include His-288 and Asn-309. N-linked (GlcNAc...) asparagine glycosylation is found at Asn-326 and Asn-346. The Prevents secretion from ER motif lies at 359–362 (KDEL).

Belongs to the peptidase C1 family. In terms of assembly, monomer.

The protein resides in the endoplasmic reticulum lumen. Thought to be involved in the hydrolysis of stored seed proteins. This is Vignain from Phaseolus vulgaris (Kidney bean).